The primary structure comprises 198 residues: MFSDRFEQLVQALRILPSVGPKSAQRMALHLLMKNREGAFGLAHALHEASSHIHECKICHSLTENEICDICLSNDRDQHLLCVVESPADVMAIEQSGSFRGKYHVLGGHLSPLDGIGPEEIGIPYLIQRLSSGEIEEVILATNATVEGQATAHYLLEATKHLPVHMTRIAQGVPQGGELEYVDSHTLSQAVHNRMKMK.

Residues 56 to 71 form a C4-type zinc finger; it reads CKICHSLTENEICDIC. In terms of domain architecture, Toprim spans 79–174; it reads HLLCVVESPA…HMTRIAQGVP (96 aa).

The protein belongs to the RecR family.

In terms of biological role, may play a role in DNA repair. It seems to be involved in an RecBC-independent recombinational process of DNA repair. It may act with RecF and RecO. The protein is Recombination protein RecR of Acinetobacter baylyi (strain ATCC 33305 / BD413 / ADP1).